The chain runs to 223 residues: ATP synthase subunit a 2 (223 aa).

Transmembrane regions (helical) follow at residues Val17 to Cys37, Phe77 to Leu97, Lys106 to Val126, Phe173 to Leu193, and Ile195 to Ala215.

Belongs to the ATPase A chain family. In terms of assembly, F-type ATPases have 2 components, CF(1) - the catalytic core - and CF(0) - the membrane proton channel. CF(1) has five subunits: alpha(3), beta(3), gamma(1), delta(1), epsilon(1). CF(0) has four main subunits: a, b, b' and c.

Its subcellular location is the cell inner membrane. Functionally, key component of the proton channel; it plays a direct role in the translocation of protons across the membrane. The protein is ATP synthase subunit a 2 of Bradyrhizobium sp. (strain BTAi1 / ATCC BAA-1182).